Here is a 29-residue protein sequence, read N- to C-terminus: Dermaseptin-9TR (29 aa).

Expressed by the skin glands.

The protein localises to the secreted. Its function is as follows. Has antimicrobial activity. This Phyllomedusa trinitatis (Trinidad leaf frog) protein is Dermaseptin-9TR.